A 486-amino-acid polypeptide reads, in one-letter code: 2-hydroxymuconic semialdehyde dehydrogenase (486 aa).

Residues Glu-254 and Cys-288 contribute to the active site.

It belongs to the aldehyde dehydrogenase family.

The catalysed reaction is (2Z,4E)-2-hydroxy-6-oxohexa-2,4-dienoate + NAD(+) + H2O = (2Z,4E)-2-hydroxyhexa-2,4-dienedioate + NADH + 2 H(+). The protein operates within aromatic compound metabolism; benzoate degradation via hydroxylation. Its function is as follows. 2-hydroxymuconic acid semialdehyde can be converted to 2-hydroxypent-2,4-dienoate either directly by the action of 2-hydroxymuconic semialdehyde hydrolase (HMSH) or by the action of three sequential enzymes, the first of which is HMSD. In Pseudomonas sp. (strain CF600), this protein is 2-hydroxymuconic semialdehyde dehydrogenase (dmpC).